Consider the following 91-residue polypeptide: Essential MCU regulator, mitochondrial (91 aa).

A helical transmembrane segment spans residues 45–65; that stretch reads VIPFGLLGVVLTVIPGLLIGA.

Belongs to the SMDT1/EMRE family.

It localises to the mitochondrion inner membrane. Essential regulatory subunit of the mitochondrial calcium uniporter (mcu) channel, a protein that mediates calcium uptake into mitochondria. In Aedes aegypti (Yellowfever mosquito), this protein is Essential MCU regulator, mitochondrial.